Reading from the N-terminus, the 630-residue chain is MMGIQILPPQLANQIAAGEVVERPASVVKELVENSLDAGASRVDIEIDKGGSKLIKIRDNGSGIPKDELALALSRHATSKLHTLDDLEAILSFGFRGEALASISSVSRLTLTSRTADQTEAWQAHAEGADMAVKVMPAAHPVGSTIEVVDLFFNTPARRRFLKSDKTEFTHIDEWLKRIALVRGDIHFTLTHNGKTVRNYRPAMNEAQYLQRLTQVSGRPFAEQALKIECQHDDLRLSGYLQSPWSPVITDTHYFYVNGRLIRDRLVNHAVRQAFAQKAELEQPGYVLMLDIDPHQVDVNVHPAKHEVRFHQSRYVHDYILQALQSALEEAGELNVVHSSSLDEVEDVFVDSPTSAVGIAAPFALGADTLESAQPLVASAAVQVKSAGAGREGASFGTQTNAFGSMATSRDSSRGSYSASESRQRTELPSKAAIASYGALLQTPAYSVKNHDYQPSLPMPAILDSQYWVMATADKLSLLPIKSVALATRCQEIEAKLATGLIGQPLLMPVSVAADADWQAVLDEHDTLIRQLGLELTIRYQQLIIKKVPPYIRESQLAKVIPEWLQSLRFETPAPSALAFWLAKHSLTGFVSAPEIWAAFSQLAEEKKQLIANKAILLPWQSWLEEQASE.

Residues 398–408 show a composition bias toward polar residues; that stretch reads TQTNAFGSMAT. Residues 398 to 425 form a disordered region; that stretch reads TQTNAFGSMATSRDSSRGSYSASESRQR.

Belongs to the DNA mismatch repair MutL/HexB family.

Functionally, this protein is involved in the repair of mismatches in DNA. It is required for dam-dependent methyl-directed DNA mismatch repair. May act as a 'molecular matchmaker', a protein that promotes the formation of a stable complex between two or more DNA-binding proteins in an ATP-dependent manner without itself being part of a final effector complex. This chain is DNA mismatch repair protein MutL, found in Shewanella baltica (strain OS185).